A 321-amino-acid chain; its full sequence is Ribose-phosphate pyrophosphokinase 1 (321 aa).

4 residues coordinate Mg(2+): D131, H133, D142, and D146.

The protein belongs to the ribose-phosphate pyrophosphokinase family.

The catalysed reaction is D-ribose 5-phosphate + ATP = 5-phospho-alpha-D-ribose 1-diphosphate + AMP + H(+). This Candida albicans (Yeast) protein is Ribose-phosphate pyrophosphokinase 1 (PRS1).